Consider the following 319-residue polypeptide: Probable casein kinase II subunit alpha homolog (319 aa).

The 280-residue stretch at 37 to 316 (YQIYQRMGRG…ADECLRHPLF (280 aa)) folds into the Protein kinase domain. Residues 43–51 (MGRGKYSEV) and Lys-64 each bind ATP. Asp-151 (proton acceptor) is an active-site residue.

Belongs to the protein kinase superfamily. Ser/Thr protein kinase family. CK2 subfamily. Tetramer composed of two alpha chains, one beta chain and one beta' chain.

It carries out the reaction L-seryl-[protein] + ATP = O-phospho-L-seryl-[protein] + ADP + H(+). The enzyme catalyses L-threonyl-[protein] + ATP = O-phospho-L-threonyl-[protein] + ADP + H(+). Its function is as follows. Catalytic subunit of a constitutively active serine/threonine-protein kinase complex that phosphorylates a large number of substrates containing acidic residues C-terminal to the phosphorylated serine or threonine. The sequence is that of Probable casein kinase II subunit alpha homolog (CKA1) from Encephalitozoon cuniculi (strain GB-M1) (Microsporidian parasite).